Reading from the N-terminus, the 490-residue chain is Transcription factor lin-26 (490 aa).

3 disordered regions span residues 96–176 (KYKD…PLHQ), 236–262 (TPEY…EPDS), and 302–326 (ASKP…KKHR). The segment at 101-110 (SSSPESPSTT) is PEST. Residues 101–120 (SSSPESPSTTASTAAQHTPP) are compositionally biased toward low complexity. 2 stretches are compositionally biased toward polar residues: residues 123–132 (AVSTPTSINT) and 151–176 (NLST…PLHQ). The span at 236–260 (TPEYDDNHHSETISKASSEDLKTEP) shows a compositional bias: basic and acidic residues. A C2H2-type; degenerate zinc finger spans residues 353-381 (YKCALCGKPTTLNSTGSRWNLLRHVIMIH).

As to expression, expressed in somatic gonads and germline precursors until the 50-cell stage. After the 100-cell stage, expression is seen in differentiating hypodermal and support cells (at protein level).

The protein resides in the nucleus. Its function is as follows. Probable transcription factor. Required to specify the fates of hypodermal and neuron-associated support cells. Functions during vulval development, playing a role in vulval precursor cell fate specification. Positively modulates expression of homeobox protein lin-39, perhaps by binding to regulatory regions of the lin-39 gene, acting in the vulval lineage. This chain is Transcription factor lin-26, found in Caenorhabditis elegans.